Here is a 520-residue protein sequence, read N- to C-terminus: Calcium-dependent protein kinase 25 (520 aa).

G2 carries the N-myristoyl glycine lipid modification. The disordered stretch occupies residues 31-87 (PLKPQLQDKPPQPMLMNKDDDKTKLNDTHGDPKLLEGKEKPAQKQTSQGQGGRKCSD). The segment covering 47–72 (NKDDDKTKLNDTHGDPKLLEGKEKPA) has biased composition (basic and acidic residues). The 259-residue stretch at 132-390 (YNLGSKLGHG…AQQVLCHPWI (259 aa)) folds into the Protein kinase domain. ATP is bound by residues 138–146 (LGHGQFGTT) and K161. D256 acts as the Proton acceptor in catalysis. S296 is subject to Phosphoserine. Residues 396-426 (APDTPLDTTVLSRLKKFSATDKLKKMALRVI) are autoinhibitory domain. The EF-hand 1 domain maps to 433-468 (EEIHELRETFKTIDSGKSGRVTYKELKNGLERFNTN). Ca(2+) is bound by residues D446, S450, R452, E457, D483, E487, T489, and E494. The 37-residue stretch at 469–505 (LDNSDINSLMQIPTDVHLEDTVDYNEFIEAIVRLRQI) folds into the EF-hand 2; degenerate domain.

This sequence belongs to the protein kinase superfamily. Ser/Thr protein kinase family. CDPK subfamily.

The protein resides in the membrane. The catalysed reaction is L-seryl-[protein] + ATP = O-phospho-L-seryl-[protein] + ADP + H(+). It carries out the reaction L-threonyl-[protein] + ATP = O-phospho-L-threonyl-[protein] + ADP + H(+). With respect to regulation, activated by calcium. Autophosphorylation may play an important role in the regulation of the kinase activity. Its function is as follows. May play a role in signal transduction pathways that involve calcium as a second messenger. This is Calcium-dependent protein kinase 25 (CPK25) from Arabidopsis thaliana (Mouse-ear cress).